We begin with the raw amino-acid sequence, 631 residues long: DNA mismatch repair protein MutL (631 aa).

This sequence belongs to the DNA mismatch repair MutL/HexB family.

This protein is involved in the repair of mismatches in DNA. It is required for dam-dependent methyl-directed DNA mismatch repair. May act as a 'molecular matchmaker', a protein that promotes the formation of a stable complex between two or more DNA-binding proteins in an ATP-dependent manner without itself being part of a final effector complex. In Lactobacillus acidophilus (strain ATCC 700396 / NCK56 / N2 / NCFM), this protein is DNA mismatch repair protein MutL.